The following is a 219-amino-acid chain: Ribosome maturation factor RimP (219 aa).

The tract at residues 195 to 219 is disordered; that stretch reads EGRIPGDDLGAEPEDAASTETQEKK.

Belongs to the RimP family.

It is found in the cytoplasm. Its function is as follows. Required for maturation of 30S ribosomal subunits. The polypeptide is Ribosome maturation factor RimP (Brucella melitensis biotype 2 (strain ATCC 23457)).